The sequence spans 246 residues: Ubiquinone biosynthesis O-methyltransferase (246 aa).

Arg-44, Gly-63, Asp-84, and Met-128 together coordinate S-adenosyl-L-methionine.

It belongs to the methyltransferase superfamily. UbiG/COQ3 family.

It catalyses the reaction a 3-demethylubiquinol + S-adenosyl-L-methionine = a ubiquinol + S-adenosyl-L-homocysteine + H(+). The catalysed reaction is a 3-(all-trans-polyprenyl)benzene-1,2-diol + S-adenosyl-L-methionine = a 2-methoxy-6-(all-trans-polyprenyl)phenol + S-adenosyl-L-homocysteine + H(+). Its pathway is cofactor biosynthesis; ubiquinone biosynthesis. In terms of biological role, O-methyltransferase that catalyzes the 2 O-methylation steps in the ubiquinone biosynthetic pathway. The chain is Ubiquinone biosynthesis O-methyltransferase from Xylella fastidiosa (strain 9a5c).